The following is a 122-amino-acid chain: Large ribosomal subunit protein uL14 (122 aa).

The protein belongs to the universal ribosomal protein uL14 family. In terms of assembly, part of the 50S ribosomal subunit. Forms a cluster with proteins L3 and L19. In the 70S ribosome, L14 and L19 interact and together make contacts with the 16S rRNA in bridges B5 and B8.

Its function is as follows. Binds to 23S rRNA. Forms part of two intersubunit bridges in the 70S ribosome. This Mycobacteroides abscessus (strain ATCC 19977 / DSM 44196 / CCUG 20993 / CIP 104536 / JCM 13569 / NCTC 13031 / TMC 1543 / L948) (Mycobacterium abscessus) protein is Large ribosomal subunit protein uL14.